The primary structure comprises 160 residues: Phosphopantetheine adenylyltransferase (160 aa).

S9 contributes to the substrate binding site. ATP-binding positions include S9–F10 and H17. K41, V73, and K87 together coordinate substrate. Residues G88–R90, E98, and Y122–S128 contribute to the ATP site.

It belongs to the bacterial CoaD family. Homohexamer. Mg(2+) serves as cofactor.

It is found in the cytoplasm. The enzyme catalyses (R)-4'-phosphopantetheine + ATP + H(+) = 3'-dephospho-CoA + diphosphate. It participates in cofactor biosynthesis; coenzyme A biosynthesis; CoA from (R)-pantothenate: step 4/5. Its function is as follows. Reversibly transfers an adenylyl group from ATP to 4'-phosphopantetheine, yielding dephospho-CoA (dPCoA) and pyrophosphate. The chain is Phosphopantetheine adenylyltransferase from Mycobacterium avium (strain 104).